The sequence spans 394 residues: MGLRMSESAKPYFAMVCLQFGYAGMNLVTKTVLDRGMSHYVLVAYRNAFATAAIAPFALLSERKVRSKMTFPIFMRIFLLALLGPVIDQNLYYIGLKLTSPTFSSAVSNIVPAITIILATLFRMEKVEMRKVRCLVKVMGTLVTVVGSILMIFYKGPFINFFRSHLTAASSPPTADYLKAAVFLLLASLSWASFFVLQAATLKKYSAHLSMSTMVCFMGTLQSLALAFVMEHNPSALNIGFDMNLLASAYAGIMSSSIAYYVQGLMMQRKGPVFVTAFNPLIVVIVSIMSFFVLGQGIYLGGVIGVVVLMVGVYAVLWGKHVDDDGEETRHEDNVVAVKCCSGNNGLTIMPKIDEADEEDVETGKATSEKESSVPEVVVVVFCSENVHSVSRPN.

10 consecutive transmembrane segments (helical) span residues 13 to 33, 40 to 60, 67 to 87, 102 to 122, 142 to 162, 180 to 200, 209 to 229, 245 to 265, 273 to 293, and 298 to 318; these read FAMV…KTVL, YVLV…FALL, SKMT…GPVI, TFSS…ATLF, LVTV…INFF, AAVF…LQAA, LSMS…LAFV, LLAS…VQGL, VFVT…SFFV, and IYLG…AVLW. EamA domains lie at 22–147 and 189–317; these read YAGM…TVVG and LSWA…YAVL.

It belongs to the drug/metabolite transporter (DMT) superfamily. Plant drug/metabolite exporter (P-DME) (TC 2.A.7.4) family.

It is found in the membrane. The sequence is that of WAT1-related protein At2g40900 from Arabidopsis thaliana (Mouse-ear cress).